The primary structure comprises 285 residues: MKVLFVIGSGAKHLEEEISRHGNLINVEIKKFPDGEKYVRVLERGKEAIVIQSTYHPQDENLIEALLLGDALSEAGFKKLKIVIPYLAYSRQDRVTKEGEPISVRAIMKMLGLYYDELYVFDIHNPKTLEHFPGIAKNIYPAEAIANYFKDKLGEGLILAPDKGALERAKRVAEVLGLEYSHFEKERISPTEVRMKPVDVDVNGKNVLIVDDIISTGGTMIKAANILRELGAKEIFVVATHGVFAEGAIERVSKAVNELAVTNTIPTEVSKISIVDYIVKLGEKE.

ATP-binding positions include 34-36 (DGE) and 91-92 (RQ). Mg(2+) is bound by residues His124 and Asp162. Lys185 is an active-site residue. Residues Arg187, Asp211, and 215–219 (STGGT) each bind D-ribose 5-phosphate.

This sequence belongs to the ribose-phosphate pyrophosphokinase family. Class III (archaeal) subfamily. Mg(2+) is required as a cofactor.

The protein resides in the cytoplasm. It catalyses the reaction D-ribose 5-phosphate + ATP = 5-phospho-alpha-D-ribose 1-diphosphate + AMP + H(+). It participates in metabolic intermediate biosynthesis; 5-phospho-alpha-D-ribose 1-diphosphate biosynthesis; 5-phospho-alpha-D-ribose 1-diphosphate from D-ribose 5-phosphate (route I): step 1/1. In terms of biological role, involved in the biosynthesis of the central metabolite phospho-alpha-D-ribosyl-1-pyrophosphate (PRPP) via the transfer of pyrophosphoryl group from ATP to 1-hydroxyl of ribose-5-phosphate (Rib-5-P). The chain is Ribose-phosphate pyrophosphokinase from Pyrococcus abyssi (strain GE5 / Orsay).